We begin with the raw amino-acid sequence, 1031 residues long: Beta-galactosidase (1031 aa).

Positions 100 and 198 each coordinate substrate. Residue Asp198 coordinates Na(+). Glu412, His414, and Glu457 together coordinate Mg(2+). Substrate is bound by residues Glu457 and 533–536 (EYAH). Glu457 acts as the Proton donor in catalysis. Glu533 (nucleophile) is an active-site residue. Asn593 provides a ligand contact to Mg(2+). Na(+) contacts are provided by Phe597 and Asn600. Substrate contacts are provided by Asn600 and Trp1005.

Belongs to the glycosyl hydrolase 2 family. In terms of assembly, homotetramer. Mg(2+) is required as a cofactor. The cofactor is Na(+).

The enzyme catalyses Hydrolysis of terminal non-reducing beta-D-galactose residues in beta-D-galactosides.. This Vibrio vulnificus (strain YJ016) protein is Beta-galactosidase.